Reading from the N-terminus, the 601-residue chain is Testis-specific gene 10 protein (601 aa).

Positions 1–10 (MMRSRSKSPR) are enriched in basic residues. Disordered stretches follow at residues 1–20 (MMRS…RGAN) and 563–588 (VSST…DRGL). Residues 459–592 (QMTNERISMQ…SPDRGLDRSL (134 aa)) are interaction with HIF1A. Positions 563–573 (VSSTMKPNTKC) are enriched in polar residues. The span at 574-588 (HSPERAHHRSPDRGL) shows a compositional bias: basic and acidic residues. Ser-591 carries the post-translational modification Phosphoserine.

This sequence belongs to the CEP135/TSGA10 family. Interacts with HIF1A. Post-translationally, processed into N-terminal 27-kDa and C-terminal 55-kDa fragments.

Its subcellular location is the cytoplasm. The protein resides in the cytoskeleton. It localises to the microtubule organizing center. The protein localises to the centrosome. It is found in the centriole. Plays a role in spermatogenesis. When overexpressed, prevents nuclear localization of HIF1A. The sequence is that of Testis-specific gene 10 protein (TSGA10) from Macaca fascicularis (Crab-eating macaque).